The chain runs to 267 residues: MPRIAIIGGSGVYDPALLTNIREETVETPYGTVKVKIGEYNGEEIVFLARHGEGHSVPPHKINYRANIWALYELGVERILSTSAVGSLNLDMKPGDFVILDQLMDFTKTRHYTFYDGEESPHDRKFVAHVDFTEPYCPELRKALMNAARELGFTYHPMGTYACMEGPRFETRAEIRALKILGADVVGMTQCPEAALARELEMCYASVAIVTNYAAGISPNKLTHTEVVELMAQKSNEIKLLLMKAIEYIPKERRCPCKDALKGATGE.

Phosphate is bound by residues Ser10, 50 to 51 (RH), and 83 to 84 (SA). Met188 contributes to the substrate binding site. Residue Thr189 participates in phosphate binding. 212–214 (NYA) contacts substrate.

The protein belongs to the PNP/MTAP phosphorylase family. MTAP subfamily. In terms of assembly, homohexamer. Dimer of a homotrimer.

The catalysed reaction is a purine D-ribonucleoside + phosphate = a purine nucleobase + alpha-D-ribose 1-phosphate. It carries out the reaction guanosine + phosphate = alpha-D-ribose 1-phosphate + guanine. The enzyme catalyses inosine + phosphate = alpha-D-ribose 1-phosphate + hypoxanthine. It participates in purine metabolism; purine nucleoside salvage. Purine nucleoside phosphorylase which is highly specific for 6-oxopurine nucleosides. Cleaves guanosine or inosine to respective bases and sugar-1-phosphate molecules. Involved in purine salvage. The sequence is that of Probable 6-oxopurine nucleoside phosphorylase from Thermococcus kodakarensis (strain ATCC BAA-918 / JCM 12380 / KOD1) (Pyrococcus kodakaraensis (strain KOD1)).